Reading from the N-terminus, the 93-residue chain is Small ribosomal subunit protein uS19 (93 aa).

This sequence belongs to the universal ribosomal protein uS19 family.

In terms of biological role, protein S19 forms a complex with S13 that binds strongly to the 16S ribosomal RNA. The chain is Small ribosomal subunit protein uS19 from Dehalococcoides mccartyi (strain ATCC BAA-2100 / JCM 16839 / KCTC 5957 / BAV1).